A 95-amino-acid polypeptide reads, in one-letter code: YcgL domain-containing protein APJL_0712 (95 aa).

The YcgL domain maps to 4–88; it reads HLCAIYKSPK…PPENLLKTFL (85 aa).

The sequence is that of YcgL domain-containing protein APJL_0712 from Actinobacillus pleuropneumoniae serotype 3 (strain JL03).